Here is a 163-residue protein sequence, read N- to C-terminus: D-aminoacyl-tRNA deacylase (163 aa).

The Gly-cisPro motif, important for rejection of L-amino acids signature appears at 141-142 (GP).

This sequence belongs to the DTD family. As to quaternary structure, homodimer.

Its subcellular location is the cytoplasm. It carries out the reaction glycyl-tRNA(Ala) + H2O = tRNA(Ala) + glycine + H(+). The catalysed reaction is a D-aminoacyl-tRNA + H2O = a tRNA + a D-alpha-amino acid + H(+). Its function is as follows. An aminoacyl-tRNA editing enzyme that deacylates mischarged D-aminoacyl-tRNAs. Also deacylates mischarged glycyl-tRNA(Ala), protecting cells against glycine mischarging by AlaRS. Acts via tRNA-based rather than protein-based catalysis; rejects L-amino acids rather than detecting D-amino acids in the active site. By recycling D-aminoacyl-tRNA to D-amino acids and free tRNA molecules, this enzyme counteracts the toxicity associated with the formation of D-aminoacyl-tRNA entities in vivo and helps enforce protein L-homochirality. The sequence is that of D-aminoacyl-tRNA deacylase from Neisseria meningitidis serogroup B (strain ATCC BAA-335 / MC58).